A 545-amino-acid chain; its full sequence is Chaperonin GroEL 2 (545 aa).

ATP is bound by residues Thr-29–Pro-32, Asp-86–Thr-90, Gly-413, Asn-479–Ala-481, and Asp-495.

It belongs to the chaperonin (HSP60) family. As to quaternary structure, forms a cylinder of 14 subunits composed of two heptameric rings stacked back-to-back. Interacts with the co-chaperonin GroES.

Its subcellular location is the cytoplasm. The catalysed reaction is ATP + H2O + a folded polypeptide = ADP + phosphate + an unfolded polypeptide.. Its function is as follows. Together with its co-chaperonin GroES, plays an essential role in assisting protein folding. The GroEL-GroES system forms a nano-cage that allows encapsulation of the non-native substrate proteins and provides a physical environment optimized to promote and accelerate protein folding. The protein is Chaperonin GroEL 2 of Prochlorococcus marinus (strain MIT 9301).